A 151-amino-acid chain; its full sequence is Putative pre-16S rRNA nuclease (151 aa).

It belongs to the YqgF nuclease family.

It localises to the cytoplasm. Its function is as follows. Could be a nuclease involved in processing of the 5'-end of pre-16S rRNA. The chain is Putative pre-16S rRNA nuclease from Methylococcus capsulatus (strain ATCC 33009 / NCIMB 11132 / Bath).